The sequence spans 116 residues: MSFCSFFGGEVFQNHFEPGVYVCAKCGYELFSSRSKYAHSSPWPAFTETIHADSVAKRPEHNRAEALKVSCGKCGNGLGHEFLNDGPKPGQSRFUIFSSSLKFVPKGKETSASQGH.

One can recognise a MsrB domain in the interval 1-106 (MSFCSFFGGE…FSSSLKFVPK (106 aa)). Residues Cys-23, Cys-26, Cys-71, and Cys-74 each contribute to the Zn(2+) site. Sec-95 serves as the catalytic Nucleophile. Sec-95 is a non-standard amino acid (selenocysteine).

It belongs to the MsrB Met sulfoxide reductase family. Zn(2+) is required as a cofactor. Post-translationally, truncated MSRB1/SEPX1 proteins produced by failed UGA/Sec decoding are ubiquitinated by the CRL2(FEM1C) E3 ubiquitin-protein ligase complex.

The protein resides in the cytoplasm. It localises to the nucleus. Its subcellular location is the cytoskeleton. It carries out the reaction L-methionyl-[protein] + [thioredoxin]-disulfide + H2O = L-methionyl-(R)-S-oxide-[protein] + [thioredoxin]-dithiol. It catalyses the reaction [thioredoxin]-disulfide + L-methionine + H2O = L-methionine (R)-S-oxide + [thioredoxin]-dithiol. Methionine-sulfoxide reductase that specifically reduces methionine (R)-sulfoxide back to methionine. While in many cases, methionine oxidation is the result of random oxidation following oxidative stress, methionine oxidation is also a post-translational modification that takes place on specific residue. Acts as a regulator of actin assembly by reducing methionine (R)-sulfoxide mediated by MICALs (MICAL1, MICAL2 or MICAL3) on actin, thereby promoting filament repolymerization. Plays a role in innate immunity by reducing oxidized actin, leading to actin repolymerization in macrophages. The chain is Methionine-R-sulfoxide reductase B1 (MSRB1) from Pongo abelii (Sumatran orangutan).